The sequence spans 363 residues: 3-dehydroquinate synthase (363 aa).

NAD(+) contacts are provided by residues Asp-75–Lys-80, Gly-109–Asp-113, Thr-133–Ser-134, Lys-146, Lys-155, and Thr-173–Thr-176. 3 residues coordinate Zn(2+): Glu-188, His-251, and His-267.

Belongs to the sugar phosphate cyclases superfamily. Dehydroquinate synthase family. It depends on Co(2+) as a cofactor. Zn(2+) is required as a cofactor. NAD(+) serves as cofactor.

The protein localises to the cytoplasm. It catalyses the reaction 7-phospho-2-dehydro-3-deoxy-D-arabino-heptonate = 3-dehydroquinate + phosphate. Its pathway is metabolic intermediate biosynthesis; chorismate biosynthesis; chorismate from D-erythrose 4-phosphate and phosphoenolpyruvate: step 2/7. Its function is as follows. Catalyzes the conversion of 3-deoxy-D-arabino-heptulosonate 7-phosphate (DAHP) to dehydroquinate (DHQ). This is 3-dehydroquinate synthase from Pseudarthrobacter chlorophenolicus (strain ATCC 700700 / DSM 12829 / CIP 107037 / JCM 12360 / KCTC 9906 / NCIMB 13794 / A6) (Arthrobacter chlorophenolicus).